A 70-amino-acid polypeptide reads, in one-letter code: Protein SlyX homolog (70 aa).

It belongs to the SlyX family.

The sequence is that of Protein SlyX homolog from Shewanella baltica (strain OS155 / ATCC BAA-1091).